A 388-amino-acid polypeptide reads, in one-letter code: Succinate--CoA ligase [ADP-forming] subunit beta (388 aa).

The ATP-grasp domain occupies K9–H244. ATP-binding positions include K46, G53–G55, E99, T102, and E107. Mg(2+)-binding residues include N199 and D213. Substrate contacts are provided by residues N264 and G321–V323.

The protein belongs to the succinate/malate CoA ligase beta subunit family. As to quaternary structure, heterotetramer of two alpha and two beta subunits. Mg(2+) serves as cofactor.

The catalysed reaction is succinate + ATP + CoA = succinyl-CoA + ADP + phosphate. It catalyses the reaction GTP + succinate + CoA = succinyl-CoA + GDP + phosphate. The protein operates within carbohydrate metabolism; tricarboxylic acid cycle; succinate from succinyl-CoA (ligase route): step 1/1. Succinyl-CoA synthetase functions in the citric acid cycle (TCA), coupling the hydrolysis of succinyl-CoA to the synthesis of either ATP or GTP and thus represents the only step of substrate-level phosphorylation in the TCA. The beta subunit provides nucleotide specificity of the enzyme and binds the substrate succinate, while the binding sites for coenzyme A and phosphate are found in the alpha subunit. The polypeptide is Succinate--CoA ligase [ADP-forming] subunit beta (Pseudomonas putida (strain ATCC 700007 / DSM 6899 / JCM 31910 / BCRC 17059 / LMG 24140 / F1)).